A 410-amino-acid chain; its full sequence is F-box protein At3g19890 (410 aa).

Residues 2-49 (TMISDLSKDLVEEILSKAPITSLGAVRSTHKQWNALSKGRLLYKAEAK) form the F-box domain. Residues 386–410 (EDKCKSIKMVDTKRQRKKRKRKSKR) form a disordered region. The segment covering 387–398 (DKCKSIKMVDTK) has biased composition (basic and acidic residues). Basic residues predominate over residues 399-410 (RQRKKRKRKSKR).

The sequence is that of F-box protein At3g19890 from Arabidopsis thaliana (Mouse-ear cress).